The following is a 471-amino-acid chain: Variant surface glycoprotein WRATAT A (471 aa).

The signal sequence occupies residues 1 to 18 (MSVLFLLLAITRTASVKA). Asn-61 and Asn-133 each carry an N-linked (GlcNAc...) asparagine glycan. Residues 373-457 (QEQTLATTGT…ANTTGSSNSF (85 aa)) form a disordered region. Low complexity predominate over residues 379 to 392 (TTGTKSSSPQSTQQ). 2 cysteine pairs are disulfide-bonded: Cys-401/Cys-414 and Cys-410/Cys-427. The span at 401–447 (CNDKAKETECNSPCKWDKEEKDEKKRCKLSEEGKQAEKENQEGKDGK) shows a compositional bias: basic and acidic residues. Polar residues predominate over residues 448–457 (ANTTGSSNSF). A glycan (N-linked (GlcNAc...) asparagine) is linked at Asn-449. Residue Ser-454 is the site of GPI-anchor amidated serine attachment. Residues 455 to 471 (NSFVIKTSPLLLAVLLL) constitute a propeptide, removed in mature form.

It is found in the cell membrane. Functionally, VSG forms a coat on the surface of the parasite. The trypanosome evades the immune response of the host by expressing a series of antigenically distinct VSGs from an estimated 1000 VSG genes. This chain is Variant surface glycoprotein WRATAT A, found in Trypanosoma brucei rhodesiense.